The sequence spans 348 residues: Anthranilate phosphoribosyltransferase (348 aa).

Residues Gly91, 94 to 95 (GD), Thr99, 101 to 104 (NIST), 119 to 127 (KHGNRSASG), and Ser131 each bind 5-phospho-alpha-D-ribose 1-diphosphate. Gly91 provides a ligand contact to anthranilate. Ser103 is a Mg(2+) binding site. Asn122 contacts anthranilate. Arg177 provides a ligand contact to anthranilate. Residues Asp236 and Glu237 each coordinate Mg(2+).

It belongs to the anthranilate phosphoribosyltransferase family. As to quaternary structure, homodimer. It depends on Mg(2+) as a cofactor.

The enzyme catalyses N-(5-phospho-beta-D-ribosyl)anthranilate + diphosphate = 5-phospho-alpha-D-ribose 1-diphosphate + anthranilate. It participates in amino-acid biosynthesis; L-tryptophan biosynthesis; L-tryptophan from chorismate: step 2/5. In terms of biological role, catalyzes the transfer of the phosphoribosyl group of 5-phosphorylribose-1-pyrophosphate (PRPP) to anthranilate to yield N-(5'-phosphoribosyl)-anthranilate (PRA). The protein is Anthranilate phosphoribosyltransferase of Synechococcus sp. (strain ATCC 27144 / PCC 6301 / SAUG 1402/1) (Anacystis nidulans).